Consider the following 194-residue polypeptide: WASH complex subunit 3 (194 aa).

An N-acetylmethionine modification is found at Met1. Residues 46 to 74 (TVCEEKLADLSLRIQQIETTLNILDAKLS) are a coiled coil. Disordered stretches follow at residues 93-121 (SVTN…QESE) and 159-194 (EGLD…SFSD). Polar residues predominate over residues 103-121 (TSEQPQQNSTQDSGLQESE).

Belongs to the CCDC53 family. In terms of assembly, component of the WASH core complex also described as WASH regulatory complex (SHRC) composed of WASH (WASHC1, WASH2P or WASH3P), WASHC2 (WASHC2A or WASHC2C), WASHC3, WASHC4 and WASHC5. The WASH core complex associates via WASHC2 with the F-actin-capping protein dimer (formed by CAPZA1, CAPZA2 or CAPZA3 and CAPZB) in a transient or substoichiometric manner which was initially described as WASH complex.

The protein resides in the early endosome. Its function is as follows. Acts as a component of the WASH core complex that functions as a nucleation-promoting factor (NPF) at the surface of endosomes, where it recruits and activates the Arp2/3 complex to induce actin polymerization, playing a key role in the fission of tubules that serve as transport intermediates during endosome sorting. The protein is WASH complex subunit 3 of Homo sapiens (Human).